The sequence spans 239 residues: U2 small nuclear ribonucleoprotein A' (239 aa).

4 LRR repeats span residues 19 to 40, 42 to 63, 64 to 85, and 88 to 109; these read KETELDLRWYQIPIIENLGVLR, VHDAIDFTDNDIRYLGNFPRMK, RLQTLLCGNNRITAIAPDIGKV, and NLKTLSLAQNHLQEIADLDPLA. The LRRCT domain maps to 122–160; it reads NPVAQKQYYRLYLIWRIPSLHILDFERVRRNERLRAEEV.

Belongs to the U2 small nuclear ribonucleoprotein A family. In terms of assembly, belongs to the 40S cdc5-associated complex (or cwf complex), a spliceosome sub-complex reminiscent of a late-stage spliceosome composed of the U2, U5 and U6 snRNAs and at least brr2, cdc5, cwf2/prp3, cwf3/syf1, cwf4/syf3, cwf5/ecm2, spp42/cwf6, cwf7/spf27, cwf8, cwf9, cwf10, cwf11, cwf12, prp45/cwf13, cwf14, cwf15, cwf16, cwf17, cwf18, cwf19, cwf20, cwf21, cwf22, cwf23, cwf24, cwf25, cwf26, cyp7/cwf27, cwf28, cwf29/ist3, lea1, msl1, prp5/cwf1, prp10, prp12/sap130, prp17, prp22, sap61, sap62, sap114, sap145, slu7, smb1, smd1, smd3, smf1, smg1 and syf2.

It localises to the nucleus. Involved in pre-mRNA splicing. This protein is associated with sn-RNP U2. It helps the A' protein to bind stem loop IV of U2 snRNA. This chain is U2 small nuclear ribonucleoprotein A' (lea1), found in Schizosaccharomyces pombe (strain 972 / ATCC 24843) (Fission yeast).